A 292-amino-acid chain; its full sequence is Selenate reductase subunit B (292 aa).

Residues 1 to 43 (MGSKETKNTSRRDFLIKGAGAAALGAGAFAISQVPLLEKLASA) constitute a signal peptide (tat-type signal). 4Fe-4S ferredoxin-type domains lie at 84–113 (WIMV…PPGV), 129–160 (VTKK…KSED), and 161–190 (GIVA…FDWG). Cys93, Cys96, Cys99, Cys103, Cys138, Cys141, Cys146, Cys150, Cys170, Cys173, Cys176, Cys180, Cys230, Cys233, Cys245, and Cys249 together coordinate [4Fe-4S] cluster.

As to quaternary structure, the complex is composed of three subunits: SrdA, SrdB and SrdC. Requires [4Fe-4S] cluster as cofactor. Predicted to be exported by the Tat system. The position of the signal peptide cleavage has not been experimentally proven.

The protein resides in the secreted. The enzyme catalyses selenite + a quinone + H2O = selenate + a quinol. Its function is as follows. Component of the respiratory selenate reductase complex, which catalyzes the reduction of selenate to selenite. This subunit probably transfers electrons from SrdC to SrdA. This chain is Selenate reductase subunit B, found in Mesobacillus selenatarsenatis (strain DSM 18680 / JCM 14380 / FERM P-15431 / SF-1).